Reading from the N-terminus, the 82-residue chain is UPF0154 protein SMU_1719c (82 aa).

The helical transmembrane segment at 4 to 24 threads the bilayer; the sequence is FLWILLVIIALLAGLVGGTFI.

The protein belongs to the UPF0154 family.

It is found in the membrane. In Streptococcus mutans serotype c (strain ATCC 700610 / UA159), this protein is UPF0154 protein SMU_1719c.